The following is a 454-amino-acid chain: Allantoinase (454 aa).

The Zn(2+) site is built by His-59, His-61, Lys-150, His-190, His-246, and Asp-319. N6-carboxylysine is present on Lys-150.

This sequence belongs to the metallo-dependent hydrolases superfamily. Allantoinase family. Homotetramer. It depends on Zn(2+) as a cofactor. Post-translationally, carboxylation allows a single lysine to coordinate two zinc ions.

The enzyme catalyses (S)-allantoin + H2O = allantoate + H(+). The protein operates within nitrogen metabolism; (S)-allantoin degradation; allantoate from (S)-allantoin: step 1/1. Catalyzes the conversion of allantoin (5-ureidohydantoin) to allantoic acid by hydrolytic cleavage of the five-member hydantoin ring. This is Allantoinase from Bacillus licheniformis (strain ATCC 14580 / DSM 13 / JCM 2505 / CCUG 7422 / NBRC 12200 / NCIMB 9375 / NCTC 10341 / NRRL NRS-1264 / Gibson 46).